The chain runs to 708 residues: Lactotransferrin (708 aa).

The signal sequence occupies residues 1 to 19 (MKLFFPALLSLGALGLCLA). Transferrin-like domains are found at residues 25-352 (VRWC…GLRE) and 364-693 (VVWC…KLRR). Disulfide bonds link C28/C64 and C38/C55. An interaction with E.coli ompC region spans residues 44-51 (RMKKVRGP). D79 is a binding site for Fe(3+). The active site involves K92. Y111 serves as a coordination point for Fe(3+). Disulfide bonds link C134-C217, C176-C192, C179-C202, C189-C200, and C250-C264. 4 residues coordinate hydrogencarbonate: T136, R140, A142, and G143. A Fe(3+)-binding site is contributed by Y211. N252 carries N-linked (GlcNAc...) asparagine glycosylation. H272 lines the Fe(3+) pocket. S278 (nucleophile) is an active-site residue. Cystine bridges form between C367-C399 and C377-C390. The N-linked (GlcNAc...) asparagine glycan is linked to N385. Fe(3+)-binding residues include D414 and Y452. 8 disulfides stabilise this stretch: C424/C703, C444/C666, C476/C551, C500/C694, C510/C524, C521/C534, C592/C606, and C644/C649. 4 residues coordinate hydrogencarbonate: T478, R482, A484, and G485. N537 carries N-linked (GlcNAc...) asparagine glycosylation. Y545 contacts Fe(3+). N-linked (GlcNAc...) asparagine glycosylation occurs at N594. H614 contributes to the Fe(3+) binding site.

This sequence belongs to the transferrin family. In terms of assembly, monomer. Found in a complex with LTF, CLU, EPPIN and SEMG1. Interacts with E.coli outer membrane protein C (OmpC). Found in a complex with MPO and LTF; interacts directly with CP, allows Fe(3+) incorporation into LTF and activation of CP ferroxidase activity. Poly-N-acetyllactosaminic carbohydrate moiety seems to be needed for TLR4 activation.

It is found in the secreted. It localises to the cytoplasmic granule. Its function is as follows. Transferrins are iron binding transport proteins which can bind two Fe(3+) ions in association with the binding of an anion, usually bicarbonate. Functionally, major iron-binding and multifunctional protein found in exocrine fluids such as breast milk and mucosal secretions. Has antimicrobial activity, which depends on the extracellular cation concentration. Antimicrobial properties include bacteriostasis, which is related to its ability to sequester free iron and thus inhibit microbial growth, as well as direct bactericidal properties leading to the release of lipopolysaccharides from the bacterial outer membrane. Can also prevent bacterial biofilm development in P.aeruginosa infection. Has weak antifungal activity against C.albicans. Has anabolic, differentiating and anti-apoptotic effects on osteoblasts and can also inhibit osteoclastogenesis, possibly playing a role in the regulation of bone growth. Promotes binding of species C adenoviruses to epithelial cells, promoting adenovirus infection. Can inhibit papillomavirus infections. Stimulates the TLR4 signaling pathway leading to NF-kappa-B activation and subsequent pro-inflammatory cytokine production while also interfering with the lipopolysaccharide (LPS)-stimulated TLR4 signaling. Inhibits neutrophil granulocyte migration to sites of apoptosis, when secreted by apoptotic cells. Stimulates VEGFA-mediated endothelial cell migration and proliferation. Binds heparin, chondroitin sulfate and possibly other glycosaminoglycans (GAGs). Also binds specifically to pneumococcal surface protein A (PspA), the lipid A portion of bacterial lipopolysaccharide (LPS), lysozyme and DNA. In terms of biological role, lactoferricin binds to the bacterial surface and is crucial for the bactericidal functions. Has some antiviral activity against papillomavirus infection. N-terminal region shows strong antifungal activity against C.albicans. Contains two BBXB heparin-binding consensus sequences that appear to form the predominate functional GAG-binding site. The lactotransferrin transferrin-like domain 1 functions as a serine protease of the peptidase S60 family that cuts arginine rich regions. This function contributes to the antimicrobial activity. Shows a preferential cleavage at -Arg-Ser-Arg-Arg-|- and -Arg-Arg-Ser-Arg-|-, and of Z-Phe-Arg-|-aminomethylcoumarin sites. This Camelus dromedarius (Dromedary) protein is Lactotransferrin (LTF).